We begin with the raw amino-acid sequence, 424 residues long: Serine--tRNA ligase (424 aa).

233 to 235 (TAE) is an L-serine binding site. Residue 264 to 266 (RRE) participates in ATP binding. Glu-287 serves as a coordination point for L-serine. 351–354 (EISS) provides a ligand contact to ATP. Residue Ser-386 participates in L-serine binding.

The protein belongs to the class-II aminoacyl-tRNA synthetase family. Type-1 seryl-tRNA synthetase subfamily. As to quaternary structure, homodimer. The tRNA molecule binds across the dimer.

The protein resides in the cytoplasm. The catalysed reaction is tRNA(Ser) + L-serine + ATP = L-seryl-tRNA(Ser) + AMP + diphosphate + H(+). The enzyme catalyses tRNA(Sec) + L-serine + ATP = L-seryl-tRNA(Sec) + AMP + diphosphate + H(+). The protein operates within aminoacyl-tRNA biosynthesis; selenocysteinyl-tRNA(Sec) biosynthesis; L-seryl-tRNA(Sec) from L-serine and tRNA(Sec): step 1/1. Its function is as follows. Catalyzes the attachment of serine to tRNA(Ser). Is also able to aminoacylate tRNA(Sec) with serine, to form the misacylated tRNA L-seryl-tRNA(Sec), which will be further converted into selenocysteinyl-tRNA(Sec). The chain is Serine--tRNA ligase from Pseudothermotoga lettingae (strain ATCC BAA-301 / DSM 14385 / NBRC 107922 / TMO) (Thermotoga lettingae).